The following is a 274-amino-acid chain: Large ribosomal subunit protein uL2 (274 aa).

Positions 223–274 are disordered; the sequence is VAMNPVDHPHGGGEGRTSGGRHPVTPWGVPTKGYKTRSNKRTDKYIVRRRNK.

Belongs to the universal ribosomal protein uL2 family. As to quaternary structure, part of the 50S ribosomal subunit. Forms a bridge to the 30S subunit in the 70S ribosome.

In terms of biological role, one of the primary rRNA binding proteins. Required for association of the 30S and 50S subunits to form the 70S ribosome, for tRNA binding and peptide bond formation. It has been suggested to have peptidyltransferase activity; this is somewhat controversial. Makes several contacts with the 16S rRNA in the 70S ribosome. The protein is Large ribosomal subunit protein uL2 of Shewanella putrefaciens (strain CN-32 / ATCC BAA-453).